We begin with the raw amino-acid sequence, 918 residues long: Exostosin-like 3 (918 aa).

The Cytoplasmic segment spans residues 1–30 (MTGYTMLRNGGVGNGGQTCMLRWSNRIRLT). Residues 1–140 (MTGYTMLRNG…LKNVISQTEH (140 aa)) form a required for interaction with REG3A region. A helical; Signal-anchor for type II membrane protein membrane pass occupies residues 31-51 (WLSFTLFIILVFFPLIAHYYL). Topologically, residues 52 to 918 (TTLDEADEAG…HDKTKCFKFI (867 aa)) are lumenal. 2 cysteine pairs are disulfide-bonded: C177-C182 and C188-C236. N290 carries N-linked (GlcNAc...) asparagine glycosylation. S361 bears the Phosphoserine mark. Cysteines 399 and 414 form a disulfide. N-linked (GlcNAc...) asparagine glycosylation occurs at N591. The UDP-N-acetyl-alpha-D-glucosamine site is built by L667, R671, N696, N722, R727, D743, D744, and D745. A Mn(2+)-binding site is contributed by D745. The N-linked (GlcNAc...) asparagine glycan is linked to N789. Residues C830 and C878 are joined by a disulfide bond. The UDP-N-acetyl-alpha-D-glucosamine site is built by E831, D832, and R875. Residue D832 is part of the active site.

It belongs to the glycosyltransferase 47 family. In terms of assembly, homodimer; disulfide-linked. Interacts with REG3A. Requires Mn(2+) as cofactor. Expressed in pancreatic islet beta-cells. Expressed in lung epithelial cells. Expressed in microglia.

The protein resides in the endoplasmic reticulum membrane. The protein localises to the golgi apparatus. It is found in the cell membrane. It localises to the nucleus. The catalysed reaction is 3-O-(beta-D-GlcA-(1-&gt;3)-beta-D-Gal-(1-&gt;3)-beta-D-Gal-(1-&gt;4)-beta-D-Xyl)-L-seryl-[protein] + UDP-N-acetyl-alpha-D-glucosamine = 3-O-(alpha-D-GlcNAc-(1-&gt;4)-beta-D-GlcA-(1-&gt;3)-beta-D-Gal-(1-&gt;3)-beta-D-Gal-(1-&gt;4)-beta-D-Xyl)-L-seryl-[protein] + UDP + H(+). Its pathway is glycan metabolism; heparan sulfate biosynthesis. Glycosyltransferase which regulates the biosynthesis of heparan sulfate (HS). Initiates HS synthesis by transferring the first N-acetyl-alpha-D-glucosamine (alpha-GlcNAc) residue (GlcNAcT-I activity) to the tetrasaccharide linker (GlcA-Gal-Gal-Xyl-)Ser core linker. May also transfer alpha-GlcNAc residues during HS elongation (GlcNAcT-II activity). Lacks glucuronyl transferase II (GlcAT-II) activity. Important for both skeletal development and hematopoiesis, through the formation of HS proteoglycans (HSPGs). Through the synthesis of HS, regulates postnatal pancreatic islet maturation and insulin secretion. In terms of biological role, receptor for REG3A, REG3B and REG3G, induces the activation of downstream signaling pathways such as PI3K-AKT or RAS-RAF-MEK-ERK signaling pathway. Required for the function of REG3A in regulating keratinocyte proliferation and differentiation. Required for the inhibition of skin inflammation mediated by REG3A through the activation of PI3K-AKT-STAT3 pathway. Required for the function of REG3A and REG3G in glucose tolerance in pancreas. Expressed in microglia, is activated by nociceptor-derived REG3G in response to endotoxins, leading to the inhibition of kynurenine pathway to prevent endotoxic death. This Mus musculus (Mouse) protein is Exostosin-like 3.